A 341-amino-acid chain; its full sequence is L-threonine 3-dehydrogenase (341 aa).

Zn(2+) is bound at residue Cys38. Residues Thr40 and His43 each act as charge relay system in the active site. His63, Glu64, Cys93, Cys96, Cys99, and Cys107 together coordinate Zn(2+). NAD(+)-binding positions include Ile175, Asp195, Arg200, 262–264 (LGI), and 286–287 (IY).

The protein belongs to the zinc-containing alcohol dehydrogenase family. Homotetramer. Zn(2+) serves as cofactor.

It localises to the cytoplasm. It catalyses the reaction L-threonine + NAD(+) = (2S)-2-amino-3-oxobutanoate + NADH + H(+). Its pathway is amino-acid degradation; L-threonine degradation via oxydo-reductase pathway; glycine from L-threonine: step 1/2. In terms of biological role, catalyzes the NAD(+)-dependent oxidation of L-threonine to 2-amino-3-ketobutyrate. This is L-threonine 3-dehydrogenase from Pseudoalteromonas translucida (strain TAC 125).